Consider the following 36-residue polypeptide: Photosystem II reaction center protein M (36 aa).

The chain crosses the membrane as a helical span at residues 7–27 (GFVASLMFVLVPTVFLIVLFI).

This sequence belongs to the PsbM family. In terms of assembly, PSII is composed of 1 copy each of membrane proteins PsbA, PsbB, PsbC, PsbD, PsbE, PsbF, PsbH, PsbI, PsbJ, PsbK, PsbL, PsbM, PsbT, PsbX, PsbY, PsbZ, Psb30/Ycf12, peripheral proteins PsbO, CyanoQ (PsbQ), PsbU, PsbV and a large number of cofactors. It forms dimeric complexes.

It localises to the cellular thylakoid membrane. Its function is as follows. One of the components of the core complex of photosystem II (PSII). PSII is a light-driven water:plastoquinone oxidoreductase that uses light energy to abstract electrons from H(2)O, generating O(2) and a proton gradient subsequently used for ATP formation. It consists of a core antenna complex that captures photons, and an electron transfer chain that converts photonic excitation into a charge separation. This subunit is found at the monomer-monomer interface. This is Photosystem II reaction center protein M from Synechococcus sp. (strain CC9311).